The chain runs to 358 residues: NADH-quinone oxidoreductase subunit H (358 aa).

8 helical membrane-spanning segments follow: residues 20–40 (ITVG…IPLI), 95–115 (ALFY…WAVI), 128–148 (IGLL…IIAG), 168–188 (ISYE…SGSM), 206–226 (VFSW…ISAV), 253–273 (GFAF…ISAL), 290–310 (WGFI…AVLY), and 334–354 (VLIP…ISPL).

The protein belongs to the complex I subunit 1 family. As to quaternary structure, NDH-1 is composed of 14 different subunits. Subunits NuoA, H, J, K, L, M, N constitute the membrane sector of the complex.

The protein resides in the cell inner membrane. The enzyme catalyses a quinone + NADH + 5 H(+)(in) = a quinol + NAD(+) + 4 H(+)(out). Its function is as follows. NDH-1 shuttles electrons from NADH, via FMN and iron-sulfur (Fe-S) centers, to quinones in the respiratory chain. The immediate electron acceptor for the enzyme in this species is believed to be ubiquinone. Couples the redox reaction to proton translocation (for every two electrons transferred, four hydrogen ions are translocated across the cytoplasmic membrane), and thus conserves the redox energy in a proton gradient. This subunit may bind ubiquinone. In Neisseria meningitidis serogroup C (strain 053442), this protein is NADH-quinone oxidoreductase subunit H.